The primary structure comprises 747 residues: AMP deaminase 1 (747 aa).

Thr81 bears the Phosphothreonine mark. The residue at position 85 (Ser85) is a Phosphoserine. Tyr216 carries the post-translational modification Phosphotyrosine. His303 and His305 together coordinate Zn(2+). Residues His305 and 374-379 (KFNDKY) each bind substrate. Ser441 carries the phosphoserine modification. His572 provides a ligand contact to Zn(2+). Glu575 is a binding site for substrate. His594 serves as the catalytic Proton acceptor. Asp649 is a Zn(2+) binding site. Substrate is bound at residue 650 to 653 (DPMQ).

It belongs to the metallo-dependent hydrolases superfamily. Adenosine and AMP deaminases family. As to quaternary structure, homotetramer. The cofactor is Zn(2+).

It carries out the reaction AMP + H2O + H(+) = IMP + NH4(+). It functions in the pathway purine metabolism; IMP biosynthesis via salvage pathway; IMP from AMP: step 1/1. Its function is as follows. AMP deaminase plays a critical role in energy metabolism. The protein is AMP deaminase 1 of Rattus norvegicus (Rat).